The sequence spans 388 residues: MNLHEYQAKQLFARYGLPAPVGYACTTPREAEEAASKIGAGPWVVKCQVHAGGRGKAGGVKVVNSKEDIRAFAENWLGKRLVTYQTDANGQPVNQILVEAATDIAKELYLGAVVDRSSRRVVFMASTEGGVEIEKVAEETPHLIHKVALDPLTGPMPYQGRELAFKLGLEGKLVQQFTKIFMGLATIFLERDLALIEINPLVITKQGDLICLDGKLGADGNALFRQPDLREMRDQSQEDPREAQAAQWELNYVALDGNIGCMVNGAGLAMGTMDIVKLHGGEPANFLDVGGGATKERVTEAFKIILSDDKVKAVLVNIFGGIVRCDLIADGIIGAVAEVGVNVPVVVRLEGNNAELGAKKLADSGLNIIAAKGLTDAAQQVVAAVEGK.

An ATP-grasp domain is found at 9–244; that stretch reads KQLFARYGLP…QSQEDPREAQ (236 aa). ATP contacts are provided by residues lysine 46, 53–55, glutamate 99, threonine 102, and glutamate 107; that span reads GRG. Mg(2+) contacts are provided by asparagine 199 and aspartate 213. Residues asparagine 264 and 321 to 323 each bind substrate; that span reads GIV.

It belongs to the succinate/malate CoA ligase beta subunit family. As to quaternary structure, heterotetramer of two alpha and two beta subunits. Requires Mg(2+) as cofactor.

The catalysed reaction is succinate + ATP + CoA = succinyl-CoA + ADP + phosphate. It carries out the reaction GTP + succinate + CoA = succinyl-CoA + GDP + phosphate. The protein operates within carbohydrate metabolism; tricarboxylic acid cycle; succinate from succinyl-CoA (ligase route): step 1/1. In terms of biological role, succinyl-CoA synthetase functions in the citric acid cycle (TCA), coupling the hydrolysis of succinyl-CoA to the synthesis of either ATP or GTP and thus represents the only step of substrate-level phosphorylation in the TCA. The beta subunit provides nucleotide specificity of the enzyme and binds the substrate succinate, while the binding sites for coenzyme A and phosphate are found in the alpha subunit. This Escherichia coli O139:H28 (strain E24377A / ETEC) protein is Succinate--CoA ligase [ADP-forming] subunit beta.